Reading from the N-terminus, the 133-residue chain is Ribonuclease P protein component (133 aa).

Belongs to the RnpA family. As to quaternary structure, consists of a catalytic RNA component (M1 or rnpB) and a protein subunit.

It catalyses the reaction Endonucleolytic cleavage of RNA, removing 5'-extranucleotides from tRNA precursor.. RNaseP catalyzes the removal of the 5'-leader sequence from pre-tRNA to produce the mature 5'-terminus. It can also cleave other RNA substrates such as 4.5S RNA. The protein component plays an auxiliary but essential role in vivo by binding to the 5'-leader sequence and broadening the substrate specificity of the ribozyme. This Corynebacterium glutamicum (strain ATCC 13032 / DSM 20300 / JCM 1318 / BCRC 11384 / CCUG 27702 / LMG 3730 / NBRC 12168 / NCIMB 10025 / NRRL B-2784 / 534) protein is Ribonuclease P protein component.